A 430-amino-acid polypeptide reads, in one-letter code: Tol-Pal system protein TolB (430 aa).

The signal sequence occupies residues 1 to 21 (MKQALRVAFGFLMLWAAVLHA).

The protein belongs to the TolB family. In terms of assembly, the Tol-Pal system is composed of five core proteins: the inner membrane proteins TolA, TolQ and TolR, the periplasmic protein TolB and the outer membrane protein Pal. They form a network linking the inner and outer membranes and the peptidoglycan layer.

It is found in the periplasm. In terms of biological role, part of the Tol-Pal system, which plays a role in outer membrane invagination during cell division and is important for maintaining outer membrane integrity. TolB occupies a key intermediary position in the Tol-Pal system because it communicates directly with both membrane-embedded components, Pal in the outer membrane and TolA in the inner membrane. The protein is Tol-Pal system protein TolB of Salmonella enteritidis PT4 (strain P125109).